The chain runs to 350 residues: Major allergen Mal f 1 (350 aa).

Positions 1–22 are cleaved as a signal peptide; the sequence is MRYSTVLAALALLGTSAVSVLA.

It is found in the secreted. It localises to the cell wall. The chain is Major allergen Mal f 1 from Malassezia furfur (Pityriasis versicolor infection agent).